The following is a 193-amino-acid chain: Probable nicotinate-nucleotide adenylyltransferase (193 aa).

The protein belongs to the NadD family.

The enzyme catalyses nicotinate beta-D-ribonucleotide + ATP + H(+) = deamido-NAD(+) + diphosphate. It participates in cofactor biosynthesis; NAD(+) biosynthesis; deamido-NAD(+) from nicotinate D-ribonucleotide: step 1/1. In terms of biological role, catalyzes the reversible adenylation of nicotinate mononucleotide (NaMN) to nicotinic acid adenine dinucleotide (NaAD). In Borreliella afzelii (strain PKo) (Borrelia afzelii), this protein is Probable nicotinate-nucleotide adenylyltransferase.